We begin with the raw amino-acid sequence, 771 residues long: Rho GTPase-activating protein 26 (771 aa).

Residues 7–262 (EFSDCYLDSP…MKENPHEHLA (256 aa)) form the BAR domain. The PH domain maps to 265 to 369 (PFTMEGYLYV…WMEAMDGREP (105 aa)). The Rho-GAP domain occupies 383 to 568 (AQLDNIGFSI…IIIENYEEMF (186 aa)). Positions 575–712 (PQTNSQLHLS…SSTSSDSSPV (138 aa)) are disordered. Over residues 608–617 (HSSEKEEKRN) the composition is skewed to basic and acidic residues. Positions 618–637 (SVNSSAESVSSSNANSSVNS) are enriched in low complexity. Polar residues-rich tracts occupy residues 638-650 (TCTQ…NLNA) and 662-671 (RPNSLLNPKN). Low complexity-rich tracts occupy residues 673–683 (SGLLPSSLNPS) and 691–712 (PMVS…SSPV). The region spanning 713–771 (SVPRKAKALYACKAEHDSELSFSAGTVFENVCPSQEPGWLEGTLNGKTGLIPENYVEFL) is the SH3 domain.

The protein resides in the cell junction. Its subcellular location is the focal adhesion. It is found in the cytoplasm. The protein localises to the cytoskeleton. It localises to the endosome membrane. In terms of biological role, GTPase-activating protein for rhoa and cdc42. May be involved in the regulation of neosynthesized protein export through a Rab-endososomal dependent export route. The polypeptide is Rho GTPase-activating protein 26 (arhgap26) (Xenopus laevis (African clawed frog)).